The primary structure comprises 168 residues: NADH-quinone oxidoreductase subunit B (168 aa).

4 residues coordinate [4Fe-4S] cluster: cysteine 49, cysteine 50, cysteine 114, and cysteine 144.

It belongs to the complex I 20 kDa subunit family. NDH-1 is composed of 14 different subunits. Subunits NuoB, C, D, E, F, and G constitute the peripheral sector of the complex. It depends on [4Fe-4S] cluster as a cofactor.

Its subcellular location is the cell membrane. The enzyme catalyses a quinone + NADH + 5 H(+)(in) = a quinol + NAD(+) + 4 H(+)(out). NDH-1 shuttles electrons from NADH, via FMN and iron-sulfur (Fe-S) centers, to quinones in the respiratory chain. Couples the redox reaction to proton translocation (for every two electrons transferred, four hydrogen ions are translocated across the cytoplasmic membrane), and thus conserves the redox energy in a proton gradient. The sequence is that of NADH-quinone oxidoreductase subunit B from Wolbachia pipientis wMel.